The sequence spans 73 residues: UPF0435 protein OB1527 (73 aa).

It belongs to the UPF0435 family.

The sequence is that of UPF0435 protein OB1527 from Oceanobacillus iheyensis (strain DSM 14371 / CIP 107618 / JCM 11309 / KCTC 3954 / HTE831).